The primary structure comprises 620 residues: Chaperone protein DnaK (620 aa).

Thr197 carries the phosphothreonine; by autocatalysis modification. The tract at residues 597–620 (AMANKNNAEQPKKKDDDVIDAEVE) is disordered.

Belongs to the heat shock protein 70 family.

Acts as a chaperone. This is Chaperone protein DnaK from Helicobacter acinonychis (strain Sheeba).